We begin with the raw amino-acid sequence, 200 residues long: Holliday junction branch migration complex subunit RuvA (200 aa).

The tract at residues 1–63 is domain I; sequence MYAYVKGKLT…EDAQLLYGFS (63 aa). Residues 64-142 are domain II; the sequence is SEEEKDMFLS…ITEEDSDSLL (79 aa). Residues 143-149 are flexible linker; that stretch reads QVDATST. The interval 150 to 200 is domain III; that stretch reads EQDQFVQEAMLALEALGYSKRELAKVEKTLNKNKYDSVDEAVKAGLQLVVS.

This sequence belongs to the RuvA family. Homotetramer. Forms an RuvA(8)-RuvB(12)-Holliday junction (HJ) complex. HJ DNA is sandwiched between 2 RuvA tetramers; dsDNA enters through RuvA and exits via RuvB. An RuvB hexamer assembles on each DNA strand where it exits the tetramer. Each RuvB hexamer is contacted by two RuvA subunits (via domain III) on 2 adjacent RuvB subunits; this complex drives branch migration. In the full resolvosome a probable DNA-RuvA(4)-RuvB(12)-RuvC(2) complex forms which resolves the HJ.

It is found in the cytoplasm. Its function is as follows. The RuvA-RuvB-RuvC complex processes Holliday junction (HJ) DNA during genetic recombination and DNA repair, while the RuvA-RuvB complex plays an important role in the rescue of blocked DNA replication forks via replication fork reversal (RFR). RuvA specifically binds to HJ cruciform DNA, conferring on it an open structure. The RuvB hexamer acts as an ATP-dependent pump, pulling dsDNA into and through the RuvAB complex. HJ branch migration allows RuvC to scan DNA until it finds its consensus sequence, where it cleaves and resolves the cruciform DNA. The chain is Holliday junction branch migration complex subunit RuvA from Staphylococcus aureus (strain MRSA252).